We begin with the raw amino-acid sequence, 352 residues long: Uroporphyrinogen decarboxylase (352 aa).

Substrate contacts are provided by residues 26–30 (RQAGR), F45, D76, Y153, S208, and H323.

It belongs to the uroporphyrinogen decarboxylase family. In terms of assembly, homodimer.

It is found in the cytoplasm. The catalysed reaction is uroporphyrinogen III + 4 H(+) = coproporphyrinogen III + 4 CO2. The protein operates within porphyrin-containing compound metabolism; protoporphyrin-IX biosynthesis; coproporphyrinogen-III from 5-aminolevulinate: step 4/4. In terms of biological role, catalyzes the decarboxylation of four acetate groups of uroporphyrinogen-III to yield coproporphyrinogen-III. The protein is Uroporphyrinogen decarboxylase of Prochlorococcus marinus (strain MIT 9313).